Reading from the N-terminus, the 747-residue chain is MRVLVLLACLAAASASAISGGYGTMVFTKEPMVNLDMKMKELCIMKLLDHILQPTMFEDIKEIAKEYNIEKSCDKYMNVDVVKQFMEMYKMGMLPRGETFVHTNELQMEEAVKVFRVLYYAKDFDVFMRTACWMRERINGGMFVYAFTAACFHRTDCKGLYLPAPYEIYPYFFVDSHVISKAFMMKMTKAAKDPVLWKYYGITVTDDNLVVIDWRKGVRRSLSQNDVMSYFMEDVDLNTYMYYLHMNYPFWMTDDAYGINKERRGEIMMYANQQLLARMRLERLSHKMCDVKPMMWNEPLETGYWPKIRLPSGDEMPVRQNNMVVATKDNLKMKQMMDDVEMMIREGILTGKIERRDGTVISLKKSEDIENLARLVLGGLEIVGDDAKVIHLTNLMKKMLSYGQYNMDKYTYVPTSLDMYTTCLRDPVFWMIMKRVCNIFTVFKNMLPKYTREQFSFPGVKVEKITTDELVTFVDEYDMDISNAMYLDATEMQNKTSDMTFMARMRRLNHHPFQVSIDVMSDKTVDAVVRIFLGPKYDCMGRLMSVNDKRLDMFELDSFMYKLVNGKNTIVRSSMDMQGFIPEYLSTRRVMESEMMPSGDGQTMVKDWWCKSRNGFPQRLMLPLGTIGGLEMQMYVIVSPVRTGMLLPTLDMTMMKDRCACRWSSCISTMPLGYPFDRPIDMASFFTSNMKFADVMIYRKDLGMSNTSKTVDTSEMVMMKDDLTYLDSDMLVKRTYKDVMMMSSMMN.

An N-terminal signal peptide occupies residues 1–15 (MRVLVLLACLAAASA). 2 N-linked (GlcNAc...) asparagine glycosylation sites follow: N494 and N706.

It belongs to the hemocyanin family. In terms of tissue distribution, fat body.

It is found in the secreted. The protein localises to the extracellular space. Functionally, larval storage protein (LSP) which may serve as a store of amino acids for synthesis of adult proteins. The polypeptide is Sex-specific storage-protein 1 (SP1) (Bombyx mori (Silk moth)).